Consider the following 447-residue polypeptide: Glutamate--tRNA ligase 2 (447 aa).

A 'HIGH' region motif is present at residues 8–18; it reads PSPTGYLHVGN. Positions 239 to 243 match the 'KMSKS' region motif; the sequence is KLSKR. K242 contacts ATP.

Belongs to the class-I aminoacyl-tRNA synthetase family. Glutamate--tRNA ligase type 1 subfamily. As to quaternary structure, monomer.

It is found in the cytoplasm. It catalyses the reaction tRNA(Glu) + L-glutamate + ATP = L-glutamyl-tRNA(Glu) + AMP + diphosphate. Its function is as follows. Catalyzes the attachment of glutamate to tRNA(Glu) in a two-step reaction: glutamate is first activated by ATP to form Glu-AMP and then transferred to the acceptor end of tRNA(Glu). This is Glutamate--tRNA ligase 2 from Granulibacter bethesdensis (strain ATCC BAA-1260 / CGDNIH1).